The following is a 167-amino-acid chain: Large ribosomal subunit protein uL10 (167 aa).

The protein belongs to the universal ribosomal protein uL10 family. Part of the ribosomal stalk of the 50S ribosomal subunit. The N-terminus interacts with L11 and the large rRNA to form the base of the stalk. The C-terminus forms an elongated spine to which L12 dimers bind in a sequential fashion forming a multimeric L10(L12)X complex.

Its function is as follows. Forms part of the ribosomal stalk, playing a central role in the interaction of the ribosome with GTP-bound translation factors. The protein is Large ribosomal subunit protein uL10 of Streptococcus thermophilus (strain CNRZ 1066).